Reading from the N-terminus, the 112-residue chain is C-type natriuretic peptide 3 (112 aa).

The N-terminal stretch at 1-19 is a signal peptide; sequence MSLRAFMLCVCLLLQSVGA. The propeptide occupies 20-90; that stretch reads RPASELQNLE…SKRSWGRYKK (71 aa). Residues 33–67 are disordered; that stretch reads QDQLSSTEHPEEDRLDRTREEPQLGGSSSREAADE. Over residues 40–54 the composition is skewed to basic and acidic residues; sequence EHPEEDRLDRTREEP. Cysteines 96 and 112 form a disulfide.

It belongs to the natriuretic peptide family. In terms of tissue distribution, spinal cord, kidney, ovary, heart and spleen, and to a lower extent in brain and liver.

It is found in the secreted. Its function is as follows. Exhibits natriuretic and vasodepressant activity. Has cGMP-stimulating activity. May help to regulate body fluid homeostasis in a variety of aquatic environments. The sequence is that of C-type natriuretic peptide 3 from Oryzias latipes (Japanese rice fish).